An 88-amino-acid polypeptide reads, in one-letter code: Small ribosomal subunit protein uS17 (88 aa).

This sequence belongs to the universal ribosomal protein uS17 family. As to quaternary structure, part of the 30S ribosomal subunit.

In terms of biological role, one of the primary rRNA binding proteins, it binds specifically to the 5'-end of 16S ribosomal RNA. The chain is Small ribosomal subunit protein uS17 from Prochlorococcus marinus (strain MIT 9215).